Reading from the N-terminus, the 265-residue chain is Tryptophan synthase alpha chain (265 aa).

Active-site proton acceptor residues include Glu49 and Asp60.

It belongs to the TrpA family. In terms of assembly, tetramer of two alpha and two beta chains.

The enzyme catalyses (1S,2R)-1-C-(indol-3-yl)glycerol 3-phosphate + L-serine = D-glyceraldehyde 3-phosphate + L-tryptophan + H2O. It participates in amino-acid biosynthesis; L-tryptophan biosynthesis; L-tryptophan from chorismate: step 5/5. The alpha subunit is responsible for the aldol cleavage of indoleglycerol phosphate to indole and glyceraldehyde 3-phosphate. In Cupriavidus taiwanensis (strain DSM 17343 / BCRC 17206 / CCUG 44338 / CIP 107171 / LMG 19424 / R1) (Ralstonia taiwanensis (strain LMG 19424)), this protein is Tryptophan synthase alpha chain.